Reading from the N-terminus, the 445-residue chain is Tol-Pal system protein TolB (445 aa).

Positions Met1–Gly26 are cleaved as a signal peptide.

Belongs to the TolB family. As to quaternary structure, the Tol-Pal system is composed of five core proteins: the inner membrane proteins TolA, TolQ and TolR, the periplasmic protein TolB and the outer membrane protein Pal. They form a network linking the inner and outer membranes and the peptidoglycan layer.

The protein localises to the periplasm. Part of the Tol-Pal system, which plays a role in outer membrane invagination during cell division and is important for maintaining outer membrane integrity. The protein is Tol-Pal system protein TolB of Jannaschia sp. (strain CCS1).